Reading from the N-terminus, the 506-residue chain is Histidine ammonia-lyase (506 aa).

Residues 143–145 (ASG) constitute a cross-link (5-imidazolinone (Ala-Gly)). Ser144 is subject to 2,3-didehydroalanine (Ser).

Belongs to the PAL/histidase family. In terms of processing, contains an active site 4-methylidene-imidazol-5-one (MIO), which is formed autocatalytically by cyclization and dehydration of residues Ala-Ser-Gly.

The protein localises to the cytoplasm. It carries out the reaction L-histidine = trans-urocanate + NH4(+). It functions in the pathway amino-acid degradation; L-histidine degradation into L-glutamate; N-formimidoyl-L-glutamate from L-histidine: step 1/3. The polypeptide is Histidine ammonia-lyase (Salmonella schwarzengrund (strain CVM19633)).